The following is a 92-amino-acid chain: Large ribosomal subunit protein eL43 (92 aa).

The C4-type zinc-finger motif lies at C39 to C60.

It belongs to the eukaryotic ribosomal protein eL43 family.

In Eremothecium gossypii (strain ATCC 10895 / CBS 109.51 / FGSC 9923 / NRRL Y-1056) (Yeast), this protein is Large ribosomal subunit protein eL43 (RPL43).